The following is a 167-amino-acid chain: Mannose-specific lectin (167 aa).

Residues 1-24 form the signal peptide; that stretch reads MAFSISSTMIFLLSLALFSTLVSA. One can recognise a Bulb-type lectin domain in the interval 25–138; the sequence is DNHLLPGERL…PIFATGTNRF (114 aa). An intrachain disulfide couples C53 to C76.

In terms of assembly, homotetramer. In terms of tissue distribution, expressed in the pseudobulb, with highest levels of expression in the non-swollen internode (at protein level).

The protein localises to the secreted. Its function is as follows. Mannose-specific lectin. Shows agglutinating activity towards chicken erythrocytes. Has antifungal activity against A.alternata and Collectotrichum species. This is Mannose-specific lectin from Dendrobium findlayanum (Findlay's orchid).